The following is a 744-amino-acid chain: Probable ubiquitin carboxyl-terminal hydrolase MINDY-4 (744 aa).

S143, S220, and S224 each carry phosphoserine. The tract at residues 211–358 (GMMAGPVASS…QLVSDRTDDK (148 aa)) is disordered. The segment covering 265-277 (VPDSSSDSVSRSP) has biased composition (low complexity). Over residues 290–299 (NVTSSSQGLS) the composition is skewed to polar residues. Residue S295 is modified to Phosphoserine. Residues 300 to 310 (QRDRPRLRSVS) are compositionally biased toward basic and acidic residues. C443 functions as the Nucleophile in the catalytic mechanism. The Proton acceptor role is filled by H664.

Belongs to the MINDY deubiquitinase family. FAM188 subfamily.

It catalyses the reaction Thiol-dependent hydrolysis of ester, thioester, amide, peptide and isopeptide bonds formed by the C-terminal Gly of ubiquitin (a 76-residue protein attached to proteins as an intracellular targeting signal).. Functionally, probable hydrolase that can remove 'Lys-48'-linked conjugated ubiquitin from proteins. This chain is Probable ubiquitin carboxyl-terminal hydrolase MINDY-4 (Mindy4), found in Mus musculus (Mouse).